A 530-amino-acid chain; its full sequence is NAD(+) kinase (530 aa).

Disordered stretches follow at residues Met-1–Asn-27, Ile-57–Asn-99, and Ser-486–Val-530. Residues Trp-13–Asn-25 show a composition bias toward basic and acidic residues. Residues Ser-59–Leu-75 are compositionally biased toward low complexity. Polar residues predominate over residues Ile-88–Asn-99. Ser-499 and Ser-503 each carry phosphoserine. Over residues Ser-499–Val-508 the composition is skewed to acidic residues.

It belongs to the NAD kinase family. As to quaternary structure, homohexamer.

The catalysed reaction is NAD(+) + ATP = ADP + NADP(+) + H(+). Its function is as follows. Specifically phosphorylates NAD in the presence of ATP, dATP, or CTP as phosphoryl donors. This is NAD(+) kinase (UTR1) from Saccharomyces cerevisiae (strain ATCC 204508 / S288c) (Baker's yeast).